The primary structure comprises 360 residues: Phospho-N-acetylmuramoyl-pentapeptide-transferase (360 aa).

11 helical membrane passes run 2–22, 26–46, 73–93, 97–117, 134–154, 168–188, 199–219, 236–256, 263–283, 288–308, and 339–359; these read LVWV…FQYL, AILG…VMIR, TMGG…WADL, YVLI…VDDW, YFWQ…TAHL, ITLA…VGGS, GLAI…AYLS, TGEL…FLWF, VFMG…VAVI, LVFF…ILQV, and IVRF…TLKI.

It belongs to the glycosyltransferase 4 family. MraY subfamily. The cofactor is Mg(2+).

The protein localises to the cell inner membrane. It catalyses the reaction UDP-N-acetyl-alpha-D-muramoyl-L-alanyl-gamma-D-glutamyl-meso-2,6-diaminopimeloyl-D-alanyl-D-alanine + di-trans,octa-cis-undecaprenyl phosphate = di-trans,octa-cis-undecaprenyl diphospho-N-acetyl-alpha-D-muramoyl-L-alanyl-D-glutamyl-meso-2,6-diaminopimeloyl-D-alanyl-D-alanine + UMP. Its pathway is cell wall biogenesis; peptidoglycan biosynthesis. Functionally, catalyzes the initial step of the lipid cycle reactions in the biosynthesis of the cell wall peptidoglycan: transfers peptidoglycan precursor phospho-MurNAc-pentapeptide from UDP-MurNAc-pentapeptide onto the lipid carrier undecaprenyl phosphate, yielding undecaprenyl-pyrophosphoryl-MurNAc-pentapeptide, known as lipid I. The protein is Phospho-N-acetylmuramoyl-pentapeptide-transferase of Hahella chejuensis (strain KCTC 2396).